The chain runs to 60 residues: Large ribosomal subunit protein bL32 (60 aa).

A disordered region spans residues Met-1–Thr-23. Basic residues predominate over residues His-7–Tyr-20.

This sequence belongs to the bacterial ribosomal protein bL32 family.

This Streptococcus equi subsp. equi (strain 4047) protein is Large ribosomal subunit protein bL32.